The chain runs to 244 residues: Aliphatic sulfonates import ATP-binding protein SsuB 2 (244 aa).

The ABC transporter domain maps to 13–229 (VQVRSLVRGF…ALGDSKFHEF (217 aa)). Residue 45–52 (GKSGSGKS) participates in ATP binding.

It belongs to the ABC transporter superfamily. Aliphatic sulfonates importer (TC 3.A.1.17.2) family. The complex is composed of two ATP-binding proteins (SsuB), two transmembrane proteins (SsuC) and a solute-binding protein (SsuA).

It localises to the cell membrane. It carries out the reaction ATP + H2O + aliphatic sulfonate-[sulfonate-binding protein]Side 1 = ADP + phosphate + aliphatic sulfonateSide 2 + [sulfonate-binding protein]Side 1.. Its function is as follows. Part of the ABC transporter complex SsuABC involved in aliphatic sulfonates import. Responsible for energy coupling to the transport system. This chain is Aliphatic sulfonates import ATP-binding protein SsuB 2, found in Rhodococcus jostii (strain RHA1).